The following is a 36-amino-acid chain: Pancreatic polypeptide (36 aa).

Tyrosine amide is present on Y36.

The protein belongs to the NPY family.

It is found in the secreted. Its function is as follows. Hormone secreted by pancreatic cells that acts as a regulator of pancreatic and gastrointestinal functions probably by signaling through the G protein-coupled receptor NPY4R2. The polypeptide is Pancreatic polypeptide (PPY) (Oryctolagus cuniculus (Rabbit)).